The following is a 541-amino-acid chain: Chaperonin GroEL (541 aa).

Residues threonine 29 to proline 32, aspartate 86 to threonine 90, glycine 413, asparagine 478 to alanine 480, and aspartate 494 each bind ATP.

This sequence belongs to the chaperonin (HSP60) family. Forms a cylinder of 14 subunits composed of two heptameric rings stacked back-to-back. Interacts with the co-chaperonin GroES.

It localises to the cytoplasm. The catalysed reaction is ATP + H2O + a folded polypeptide = ADP + phosphate + an unfolded polypeptide.. Its function is as follows. Together with its co-chaperonin GroES, plays an essential role in assisting protein folding. The GroEL-GroES system forms a nano-cage that allows encapsulation of the non-native substrate proteins and provides a physical environment optimized to promote and accelerate protein folding. This is Chaperonin GroEL from Agathobacter rectalis (strain ATCC 33656 / DSM 3377 / JCM 17463 / KCTC 5835 / VPI 0990) (Eubacterium rectale).